A 248-amino-acid chain; its full sequence is Ubiquinone/menaquinone biosynthesis C-methyltransferase UbiE (248 aa).

S-adenosyl-L-methionine contacts are provided by S68 and D92.

It belongs to the class I-like SAM-binding methyltransferase superfamily. MenG/UbiE family.

It catalyses the reaction a 2-demethylmenaquinol + S-adenosyl-L-methionine = a menaquinol + S-adenosyl-L-homocysteine + H(+). The enzyme catalyses a 2-methoxy-6-(all-trans-polyprenyl)benzene-1,4-diol + S-adenosyl-L-methionine = a 5-methoxy-2-methyl-3-(all-trans-polyprenyl)benzene-1,4-diol + S-adenosyl-L-homocysteine + H(+). The protein operates within quinol/quinone metabolism; menaquinone biosynthesis; menaquinol from 1,4-dihydroxy-2-naphthoate: step 2/2. Its pathway is cofactor biosynthesis; ubiquinone biosynthesis. Functionally, methyltransferase required for the conversion of demethylmenaquinol (DMKH2) to menaquinol (MKH2) and the conversion of 2-polyprenyl-6-methoxy-1,4-benzoquinol (DDMQH2) to 2-polyprenyl-3-methyl-6-methoxy-1,4-benzoquinol (DMQH2). The protein is Ubiquinone/menaquinone biosynthesis C-methyltransferase UbiE of Rickettsia bellii (strain OSU 85-389).